We begin with the raw amino-acid sequence, 95 residues long: Protein S100-A1 (95 aa).

EF-hand domains follow at residues 12 to 47 (IKVFHTYSSKEGDKYKLSKAELKSLLQGELNDFLSA) and 49 to 84 (KDPMVVEKIMSDLDENQDGEVDFQEFVVLVAALTVA). Ca(2+) contacts are provided by Lys27, Glu32, Asp62, Asn64, Asp66, Glu68, and Glu73.

This sequence belongs to the S-100 family. Dimer of either two alpha chains, or two beta chains, or one alpha and one beta chain. Also forms heterodimers with S100P. Interacts with AGER. Interacts with CAPZA1. Interacts with FKBP4. Interacts with RYR1 and RYR2. Interacts with CACYBP in a calcium-dependent manner. Interacts with PPP5C (via TPR repeats); the interaction is calcium-dependent and modulates PPP5C activity. Interacts with ATP2A2 and PLN in a Ca(2+)-dependent manner. Interacts with mitochondrial F1-ATPase subunits ATP5F1A and ATP5F1B; these interactions increase F1-ATPase activity. Post-translationally, glutathionylated; glutathionylation increases affinity to calcium about 10-fold.

The protein localises to the cytoplasm. It localises to the sarcoplasmic reticulum. It is found in the mitochondrion. Its function is as follows. Small calcium binding protein that plays important roles in several biological processes such as Ca(2+) homeostasis, chondrocyte biology and cardiomyocyte regulation. In response to an increase in intracellular Ca(2+) levels, binds calcium which triggers conformational changes. These changes allow interactions with specific target proteins and modulate their activity. Regulates a network in cardiomyocytes controlling sarcoplasmic reticulum Ca(2+) cycling and mitochondrial function through interaction with the ryanodine receptors RYR1 and RYR2, sarcoplasmic reticulum Ca(2+)-ATPase/ATP2A2 and mitochondrial F1-ATPase. Facilitates diastolic Ca(2+) dissociation and myofilament mechanics in order to improve relaxation during diastole. The chain is Protein S100-A1 (s100a1) from Misgurnus fossilis (Weatherfish).